The following is a 432-amino-acid chain: Enolase (432 aa).

Residue Gln-163 participates in (2R)-2-phosphoglycerate binding. Glu-205 functions as the Proton donor in the catalytic mechanism. The Mg(2+) site is built by Asp-241, Glu-289, and Asp-316. Residues Lys-341, Arg-370, Ser-371, and Lys-392 each coordinate (2R)-2-phosphoglycerate. Lys-341 serves as the catalytic Proton acceptor.

Belongs to the enolase family. It depends on Mg(2+) as a cofactor.

Its subcellular location is the cytoplasm. The protein resides in the secreted. The protein localises to the cell surface. It carries out the reaction (2R)-2-phosphoglycerate = phosphoenolpyruvate + H2O. Its pathway is carbohydrate degradation; glycolysis; pyruvate from D-glyceraldehyde 3-phosphate: step 4/5. Its function is as follows. Catalyzes the reversible conversion of 2-phosphoglycerate (2-PG) into phosphoenolpyruvate (PEP). It is essential for the degradation of carbohydrates via glycolysis. The chain is Enolase from Treponema pallidum (strain Nichols).